The sequence spans 149 residues: MENKRFFIVYYSSKSNNTHRFMLKLNCKCLRLPIEQKDEPDEILESKIPTVNHPFILLTPTYAGGLGKLKGAVPKPVKKFLNNPVNRNNCKAVIASGNTNFNDTYCIAGDIISQKLQIPFLYKFELLGTNSDVENVIKIGNEFWEKNNF.

The protein belongs to the NrdI family.

Functionally, probably involved in ribonucleotide reductase function. In Malacoplasma penetrans (strain HF-2) (Mycoplasma penetrans), this protein is Protein NrdI.